A 353-amino-acid chain; its full sequence is Outer membrane protein A (353 aa).

An N-terminal signal peptide occupies residues 1–21 (MKKTAIALAVALVGFATVAQA). A run of 8 beta stranded transmembrane segments spans residues 27-37 (TWYTGGKLGWS), 56-67 (QLGAGAFFGYQA), 71-79 (LGFEMGYDW), 97-108 (QGVQLAAKLSYP), 113-121 (LDVYTRLGG), 148-157 (PLVALGAEYA), 162-169 (WATRMEYQ), and 188-196 (LLSVGVSYR). 4 consecutive repeat copies span residues 208–209 (AP), 210–211 (TP), 212–213 (AP), and 214–215 (AP). The 4 X 2 AA approximate tandem repeats of A-P stretch occupies residues 208–215 (APTPAPAP). Residues 217–345 (VDTKRFTLKS…RVEIEVKGYK (129 aa)) form the OmpA-like domain. A disulfide bridge connects residues Cys-318 and Cys-330.

It belongs to the outer membrane OOP (TC 1.B.6) superfamily. OmpA family. Monomer and homodimer.

It localises to the cell outer membrane. Its function is as follows. With TolR probably plays a role in maintaining the position of the peptidoglycan cell wall in the periplasm. Acts as a porin with low permeability that allows slow penetration of small solutes; an internal gate slows down solute passage. The chain is Outer membrane protein A from Yersinia pseudotuberculosis serotype I (strain IP32953).